A 287-amino-acid chain; its full sequence is Probable endoribonuclease YicC (287 aa).

Belongs to the YicC/YloC family. A divalent metal cation serves as cofactor.

Its function is as follows. Probably a ssRNA endonuclease. Might contribute to small RNA (sRNA) regulation. This is Probable endoribonuclease YicC from Haemophilus influenzae (strain ATCC 51907 / DSM 11121 / KW20 / Rd).